A 159-amino-acid polypeptide reads, in one-letter code: Large ribosomal subunit protein uL30 (159 aa).

Belongs to the universal ribosomal protein uL30 family. In terms of assembly, part of the 50S ribosomal subunit.

This chain is Large ribosomal subunit protein uL30, found in Ignicoccus hospitalis (strain KIN4/I / DSM 18386 / JCM 14125).